A 392-amino-acid chain; its full sequence is Cobalt-precorrin-5B C(1)-methyltransferase (392 aa).

The protein belongs to the CbiD family.

The catalysed reaction is Co-precorrin-5B + S-adenosyl-L-methionine = Co-precorrin-6A + S-adenosyl-L-homocysteine. It participates in cofactor biosynthesis; adenosylcobalamin biosynthesis; cob(II)yrinate a,c-diamide from sirohydrochlorin (anaerobic route): step 6/10. Its function is as follows. Catalyzes the methylation of C-1 in cobalt-precorrin-5B to form cobalt-precorrin-6A. In Pelobacter propionicus (strain DSM 2379 / NBRC 103807 / OttBd1), this protein is Cobalt-precorrin-5B C(1)-methyltransferase.